Consider the following 70-residue polypeptide: Small ribosomal subunit protein bS21 (70 aa).

Residues 39–70 (EKPTTERKRKKAAAVSRTRKRLRSQMLPKKLY) are disordered. Over residues 45 to 61 (RKRKKAAAVSRTRKRLR) the composition is skewed to basic residues.

Belongs to the bacterial ribosomal protein bS21 family.

The protein is Small ribosomal subunit protein bS21 of Ralstonia nicotianae (strain ATCC BAA-1114 / GMI1000) (Ralstonia solanacearum).